We begin with the raw amino-acid sequence, 450 residues long: Salicylate synthase (450 aa).

Glu252 serves as the catalytic Proton donor. 270 to 271 (GT) provides a ligand contact to substrate. A Mg(2+)-binding site is contributed by Glu297. Substrate contacts are provided by residues Tyr385, Arg405, and 419–421 (GAG). Residues Glu431 and Glu434 each contribute to the Mg(2+) site. Lys438 is a substrate binding site.

This sequence belongs to the anthranilate synthase component I family. Salicylate synthase subfamily. Monomer. Mg(2+) serves as cofactor.

The catalysed reaction is chorismate = isochorismate. It catalyses the reaction isochorismate = salicylate + pyruvate. It carries out the reaction chorismate = prephenate. It participates in siderophore biosynthesis; mycobactin biosynthesis. Its function is as follows. Involved in the incorporation of salicylate into the virulence-conferring salicylate-based siderophore mycobactin. Catalyzes the initial conversion of chorismate to yield the intermediate isochorismate (isochorismate synthase activity), and the subsequent elimination of the enolpyruvyl side chain in a lyase reaction to give salicylate (isochorismate pyruvate-lyase activity). In the absence of magnesium, MbtI displays a chorismate mutase activity and converts chorismate to prephenate. The protein is Salicylate synthase (mbtI) of Mycolicibacterium paratuberculosis (strain ATCC BAA-968 / K-10) (Mycobacterium paratuberculosis).